The following is a 67-amino-acid chain: Large ribosomal subunit protein bL35 (67 aa).

The protein belongs to the bacterial ribosomal protein bL35 family.

This Rickettsia prowazekii (strain Madrid E) protein is Large ribosomal subunit protein bL35.